The following is a 230-amino-acid chain: Protein GrpE (230 aa).

Disordered stretches follow at residues M1 to K28 and G209 to A230. A compositionally biased stretch (polar residues) spans N221 to A230.

The protein belongs to the GrpE family. In terms of assembly, homodimer.

It localises to the cytoplasm. Functionally, participates actively in the response to hyperosmotic and heat shock by preventing the aggregation of stress-denatured proteins, in association with DnaK and GrpE. It is the nucleotide exchange factor for DnaK and may function as a thermosensor. Unfolded proteins bind initially to DnaJ; upon interaction with the DnaJ-bound protein, DnaK hydrolyzes its bound ATP, resulting in the formation of a stable complex. GrpE releases ADP from DnaK; ATP binding to DnaK triggers the release of the substrate protein, thus completing the reaction cycle. Several rounds of ATP-dependent interactions between DnaJ, DnaK and GrpE are required for fully efficient folding. This is Protein GrpE from Brucella ovis (strain ATCC 25840 / 63/290 / NCTC 10512).